A 167-amino-acid polypeptide reads, in one-letter code: Leptin (167 aa).

An N-terminal signal peptide occupies residues M1–A21. C117 and C167 are disulfide-bonded.

It belongs to the leptin family.

The protein localises to the secreted. In terms of biological role, key player in the regulation of energy balance and body weight control. Once released into the circulation, has central and peripheral effects by binding LEPR, found in many tissues, which results in the activation of several major signaling pathways. In the hypothalamus, acts as an appetite-regulating factor that induces a decrease in food intake and an increase in energy consumption by inducing anorexinogenic factors and suppressing orexigenic neuropeptides, also regulates bone mass and secretion of hypothalamo-pituitary-adrenal hormones. In the periphery, increases basal metabolism, influences reproductive function, regulates pancreatic beta-cell function and insulin secretion, is pro-angiogenic for endothelial cell and affects innate and adaptive immunity. In the arcuate nucleus of the hypothalamus, activates by depolarization POMC neurons inducing FOS and SOCS3 expression to release anorexigenic peptides and inhibits by hyperpolarization NPY neurons inducing SOCS3 with a consequent reduction on release of orexigenic peptides. In addition to its known satiety inducing effect, has a modulatory role in nutrient absorption. In the intestine, reduces glucose absorption by enterocytes by activating PKC and leading to a sequential activation of p38, PI3K and ERK signaling pathways which exerts an inhibitory effect on glucose absorption. Acts as a growth factor on certain tissues, through the activation of different signaling pathways increases expression of genes involved in cell cycle regulation such as CCND1, via JAK2-STAT3 pathway, or VEGFA, via MAPK1/3 and PI3K-AKT1 pathways. May also play an apoptotic role via JAK2-STAT3 pathway and up-regulation of BIRC5 expression. Pro-angiogenic, has mitogenic activity on vascular endothelial cells and plays a role in matrix remodeling by regulating the expression of matrix metalloproteinases (MMPs) and tissue inhibitors of metalloproteinases (TIMPs). In innate immunity, modulates the activity and function of neutrophils by increasing chemotaxis and the secretion of oxygen radicals. Increases phagocytosis by macrophages and enhances secretion of pro-inflammatory mediators. Increases cytotoxic ability of NK cells. Plays a pro-inflammatory role, in synergy with IL1B, by inducing NOS2 which promotes the production of IL6, IL8 and Prostaglandin E2, through a signaling pathway that involves JAK2, PI3K, MAP2K1/MEK1 and MAPK14/p38. In adaptive immunity, promotes the switch of memory T-cells towards T helper-1 cell immune responses. Increases CD4(+)CD25(-) T-cell proliferation and reduces autophagy during TCR (T-cell receptor) stimulation, through MTOR signaling pathway activation and BCL2 up-regulation. The protein is Leptin (LEP) of Halichoerus grypus (Gray seal).